The primary structure comprises 458 residues: Cysteine--tRNA ligase (458 aa).

Cys-29 lines the Zn(2+) pocket. The short motif at 31-41 (PTVYDFLHIGN) is the 'HIGH' region element. Zn(2+) contacts are provided by Cys-211, His-236, and Glu-240. Positions 269–273 (KMSKS) match the 'KMSKS' region motif. An ATP-binding site is contributed by Lys-272.

The protein belongs to the class-I aminoacyl-tRNA synthetase family. As to quaternary structure, monomer. Requires Zn(2+) as cofactor.

Its subcellular location is the cytoplasm. It catalyses the reaction tRNA(Cys) + L-cysteine + ATP = L-cysteinyl-tRNA(Cys) + AMP + diphosphate. The protein is Cysteine--tRNA ligase of Beijerinckia indica subsp. indica (strain ATCC 9039 / DSM 1715 / NCIMB 8712).